A 356-amino-acid polypeptide reads, in one-letter code: Cysteine proteinase 3 (356 aa).

The signal sequence occupies residues 1 to 16 (MSRLSLVLILVAGLFA). The propeptide at 17–138 (TALAGPATFA…KGNLKLTNVV (122 aa)) is activation peptide. Asn123 is a glycosylation site (N-linked (GlcNAc...) asparagine). Intrachain disulfides connect Cys160–Cys203 and Cys194–Cys236. Cys163 is an active-site residue. Residue Asn252 is glycosylated (N-linked (GlcNAc...) asparagine). Residues Cys294 and Cys344 are joined by a disulfide bond. Catalysis depends on residues His303 and Asn323.

Belongs to the peptidase C1 family. As to expression, predominantly expressed in stem and root.

It is found in the vacuole. The polypeptide is Cysteine proteinase 3 (CYP-3) (Solanum lycopersicum (Tomato)).